The chain runs to 212 residues: ATP-dependent Clp protease proteolytic subunit (212 aa).

The Nucleophile role is filled by Ser106. His131 is an active-site residue.

This sequence belongs to the peptidase S14 family. As to quaternary structure, fourteen ClpP subunits assemble into 2 heptameric rings which stack back to back to give a disk-like structure with a central cavity, resembling the structure of eukaryotic proteasomes.

Its subcellular location is the cytoplasm. The enzyme catalyses Hydrolysis of proteins to small peptides in the presence of ATP and magnesium. alpha-casein is the usual test substrate. In the absence of ATP, only oligopeptides shorter than five residues are hydrolyzed (such as succinyl-Leu-Tyr-|-NHMec, and Leu-Tyr-Leu-|-Tyr-Trp, in which cleavage of the -Tyr-|-Leu- and -Tyr-|-Trp bonds also occurs).. Functionally, cleaves peptides in various proteins in a process that requires ATP hydrolysis. Has a chymotrypsin-like activity. Plays a major role in the degradation of misfolded proteins. The protein is ATP-dependent Clp protease proteolytic subunit of Rhodopseudomonas palustris (strain HaA2).